The sequence spans 632 residues: 1-deoxy-D-xylulose-5-phosphate synthase (632 aa).

Residues H78 and 119–121 (AHS) contribute to the thiamine diphosphate site. D150 is a binding site for Mg(2+). Thiamine diphosphate contacts are provided by residues 151-152 (GA), N179, Y286, and E368. N179 is a Mg(2+) binding site.

The protein belongs to the transketolase family. DXPS subfamily. In terms of assembly, homodimer. It depends on Mg(2+) as a cofactor. Thiamine diphosphate serves as cofactor.

The enzyme catalyses D-glyceraldehyde 3-phosphate + pyruvate + H(+) = 1-deoxy-D-xylulose 5-phosphate + CO2. The protein operates within metabolic intermediate biosynthesis; 1-deoxy-D-xylulose 5-phosphate biosynthesis; 1-deoxy-D-xylulose 5-phosphate from D-glyceraldehyde 3-phosphate and pyruvate: step 1/1. Functionally, catalyzes the acyloin condensation reaction between C atoms 2 and 3 of pyruvate and glyceraldehyde 3-phosphate to yield 1-deoxy-D-xylulose-5-phosphate (DXP). This chain is 1-deoxy-D-xylulose-5-phosphate synthase, found in Albidiferax ferrireducens (strain ATCC BAA-621 / DSM 15236 / T118) (Rhodoferax ferrireducens).